A 156-amino-acid polypeptide reads, in one-letter code: Ribosomal RNA large subunit methyltransferase H (156 aa).

Residues L73, G104, and 123–128 contribute to the S-adenosyl-L-methionine site; that span reads LSALTM.

This sequence belongs to the RNA methyltransferase RlmH family. In terms of assembly, homodimer.

It localises to the cytoplasm. It catalyses the reaction pseudouridine(1915) in 23S rRNA + S-adenosyl-L-methionine = N(3)-methylpseudouridine(1915) in 23S rRNA + S-adenosyl-L-homocysteine + H(+). Specifically methylates the pseudouridine at position 1915 (m3Psi1915) in 23S rRNA. This chain is Ribosomal RNA large subunit methyltransferase H, found in Tolumonas auensis (strain DSM 9187 / NBRC 110442 / TA 4).